We begin with the raw amino-acid sequence, 767 residues long: Protein transport protein Sec23B (767 aa).

A2 bears the N-acetylalanine mark. Residues C61, C66, C85, and C88 each coordinate Zn(2+). An N6-acetyllysine modification is found at K564. The Gelsolin-like repeat unit spans residues 634–720; it reads PEPVLLDSSS…EHGGSQARFL (87 aa).

This sequence belongs to the SEC23/SEC24 family. SEC23 subfamily. As to quaternary structure, COPII is composed of at least five proteins: the Sec23/24 complex, the Sec13/31 complex and Sar1. Interacts with SAR1A.

Its subcellular location is the cytoplasmic vesicle. It is found in the COPII-coated vesicle membrane. It localises to the endoplasmic reticulum membrane. The protein resides in the cytoplasm. The protein localises to the cytosol. Functionally, component of the coat protein complex II (COPII) which promotes the formation of transport vesicles from the endoplasmic reticulum (ER). The coat has two main functions, the physical deformation of the endoplasmic reticulum membrane into vesicles and the selection of cargo molecules for their transport to the Golgi complex. The protein is Protein transport protein Sec23B of Mus musculus (Mouse).